A 75-amino-acid chain; its full sequence is Small ribosomal subunit protein bS18 (75 aa).

It belongs to the bacterial ribosomal protein bS18 family. As to quaternary structure, part of the 30S ribosomal subunit. Forms a tight heterodimer with protein bS6.

In terms of biological role, binds as a heterodimer with protein bS6 to the central domain of the 16S rRNA, where it helps stabilize the platform of the 30S subunit. The chain is Small ribosomal subunit protein bS18 from Baumannia cicadellinicola subsp. Homalodisca coagulata.